The following is a 344-amino-acid chain: Acetylpolyamine amidohydrolase 2 (344 aa).

His-159 serves as the catalytic Proton donor/acceptor. Zn(2+)-binding residues include Asp-195, His-197, and Asp-284.

This sequence belongs to the histone deacetylase family. In terms of assembly, homodimer. Zn(2+) serves as cofactor.

It carries out the reaction N-acetylputrescine + H2O = putrescine + acetate. The enzyme catalyses N-acetylcadaverine + H2O = cadaverine + acetate. It participates in amine and polyamine metabolism. Functionally, catalyzes the deacetylation of acetylated polyamines such as N-acetylputrescine and N-acetylcadaverine. Plays an important role in the metabolism of acetylated polyamines in P.aeruginosa. Is involved in the degradation pathways of N-acetylputrescine and N-acetylcadaverine, that allow P.aeruginosa to utilize these acetylpolyamines as a carbon source under glucose starvation. Shows nearly no activity against N(1)-acetylspermine and N(1)-acetylspermidine. Can also hydrolyze artificial trifluoroacetylated lysine-derivative, and to a lesser extent, acetylated lysine-derivative. The sequence is that of Acetylpolyamine amidohydrolase 2 from Pseudomonas aeruginosa (strain ATCC 15692 / DSM 22644 / CIP 104116 / JCM 14847 / LMG 12228 / 1C / PRS 101 / PAO1).